An 87-amino-acid chain; its full sequence is Small ribosomal subunit protein bS20 (87 aa).

Residues 1–20 (MANHKSAEKRARQTIKRTER) form a disordered region.

This sequence belongs to the bacterial ribosomal protein bS20 family.

Binds directly to 16S ribosomal RNA. This Campylobacter lari (strain RM2100 / D67 / ATCC BAA-1060) protein is Small ribosomal subunit protein bS20.